Consider the following 160-residue polypeptide: Ureidoglycolate lyase (160 aa).

Belongs to the ureidoglycolate lyase family. Homodimer. Ni(2+) serves as cofactor.

It carries out the reaction (S)-ureidoglycolate = urea + glyoxylate. It functions in the pathway nitrogen metabolism; (S)-allantoin degradation. Catalyzes the catabolism of the allantoin degradation intermediate (S)-ureidoglycolate, generating urea and glyoxylate. Involved in the anaerobic utilization of allantoin as sole nitrogen source. Reinforces the induction of genes involved in the degradation of allantoin and glyoxylate by producing glyoxylate. This is Ureidoglycolate lyase from Escherichia coli O127:H6 (strain E2348/69 / EPEC).